A 259-amino-acid polypeptide reads, in one-letter code: Carbonic anhydrase 1 (259 aa).

Ala1 carries the post-translational modification N-acetylalanine. Residues 2 to 258 (HAWGYGPTDG…LKGRHVRASF (257 aa)) form the Alpha-carbonic anhydrase domain. The active-site Proton donor/acceptor is His63. Residues His93, His95, and His118 each contribute to the Zn(2+) site. Substrate-binding positions include Thr197 and 197–198 (TT).

It belongs to the alpha-carbonic anhydrase family. The cofactor is Zn(2+).

It is found in the cytoplasm. It carries out the reaction hydrogencarbonate + H(+) = CO2 + H2O. In terms of biological role, catalyzes the reversible hydration of carbon dioxide. This chain is Carbonic anhydrase 1 (ca1), found in Chionodraco hamatus (Antarctic teleost icefish).